The chain runs to 347 residues: Gene 34 protein (347 aa).

The interval 95-126 (GKGGEAGQRAGEDDERMDEGVPEEGAPRSPHP) is disordered. A compositionally biased stretch (acidic residues) spans 106-116 (EDDERMDEGVP).

This sequence belongs to the herpesviridae UL95 family.

The protein is Gene 34 protein (34) of Equus caballus (Horse).